The primary structure comprises 1512 residues: DNA polymerase (1512 aa).

The protein belongs to the DNA polymerase type-B family.

It localises to the host nucleus. It carries out the reaction DNA(n) + a 2'-deoxyribonucleoside 5'-triphosphate = DNA(n+1) + diphosphate. In Ictalurid herpesvirus 1 (strain Auburn) (IcHV-1), this protein is DNA polymerase (57/58).